Consider the following 581-residue polypeptide: Proline--tRNA ligase (581 aa).

This sequence belongs to the class-II aminoacyl-tRNA synthetase family. ProS type 1 subfamily. In terms of assembly, homodimer.

Its subcellular location is the cytoplasm. It carries out the reaction tRNA(Pro) + L-proline + ATP = L-prolyl-tRNA(Pro) + AMP + diphosphate. Catalyzes the attachment of proline to tRNA(Pro) in a two-step reaction: proline is first activated by ATP to form Pro-AMP and then transferred to the acceptor end of tRNA(Pro). As ProRS can inadvertently accommodate and process non-cognate amino acids such as alanine and cysteine, to avoid such errors it has two additional distinct editing activities against alanine. One activity is designated as 'pretransfer' editing and involves the tRNA(Pro)-independent hydrolysis of activated Ala-AMP. The other activity is designated 'posttransfer' editing and involves deacylation of mischarged Ala-tRNA(Pro). The misacylated Cys-tRNA(Pro) is not edited by ProRS. The polypeptide is Proline--tRNA ligase (Acidovorax ebreus (strain TPSY) (Diaphorobacter sp. (strain TPSY))).